The primary structure comprises 292 residues: Protoheme IX farnesyltransferase (292 aa).

The next 9 membrane-spanning stretches (helical) occupy residues 12-32 (ITWL…PQAS), 43-63 (LLRL…TAAL), 94-114 (LAFG…GVNL), 115-135 (LSAG…TPMK), 144-164 (VGAI…AGGL), 169-189 (WVLF…IAWM), 216-236 (IVIY…LGMS), 239-259 (LYLV…VRVA), and 267-287 (ARGV…LMLL).

This sequence belongs to the UbiA prenyltransferase family. Protoheme IX farnesyltransferase subfamily.

The protein localises to the cell inner membrane. It catalyses the reaction heme b + (2E,6E)-farnesyl diphosphate + H2O = Fe(II)-heme o + diphosphate. Its pathway is porphyrin-containing compound metabolism; heme O biosynthesis; heme O from protoheme: step 1/1. In terms of biological role, converts heme B (protoheme IX) to heme O by substitution of the vinyl group on carbon 2 of heme B porphyrin ring with a hydroxyethyl farnesyl side group. The protein is Protoheme IX farnesyltransferase of Solibacter usitatus (strain Ellin6076).